We begin with the raw amino-acid sequence, 176 residues long: Protein FAM89A (176 aa).

The segment at 140-165 (DFQEQGSLRDGQGRGSPGDPSLPLTH) is disordered.

Belongs to the FAM89 family.

This is Protein FAM89A (Fam89a) from Rattus norvegicus (Rat).